Reading from the N-terminus, the 26-residue chain is DNA-binding transcriptional regulator NtrC (26 aa).

The 23-residue stretch at 4 to 26 (TILVADDDAAIRTVLNQALSRAG) folds into the Response regulatory domain.

In terms of processing, phosphorylated and dephosphorylated by NtrB.

Its subcellular location is the cytoplasm. In terms of biological role, member of the two-component regulatory system NtrB/NtrC, which controls expression of the nitrogen-regulated (ntr) genes in response to nitrogen limitation. Phosphorylated NtrC binds directly to DNA and stimulates the formation of open promoter-sigma54-RNA polymerase complexes. The polypeptide is DNA-binding transcriptional regulator NtrC (ntrC) (Rhizobium leguminosarum bv. phaseoli).